A 127-amino-acid chain; its full sequence is Anti-adapter protein IraD (127 aa).

This sequence belongs to the GpW/Gp25 family. IraD subfamily. As to quaternary structure, interacts with RssB.

It is found in the cytoplasm. Its function is as follows. Inhibits RpoS proteolysis by regulating RssB activity, thereby increasing the stability of the sigma stress factor RpoS during oxidative stress. Its effect on RpoS stability is due to its interaction with RssB, which probably blocks the interaction of RssB with RpoS, and the consequent delivery of the RssB-RpoS complex to the ClpXP protein degradation pathway. The chain is Anti-adapter protein IraD from Escherichia coli O6:H1 (strain CFT073 / ATCC 700928 / UPEC).